We begin with the raw amino-acid sequence, 348 residues long: Serpentine receptor class beta-7 (348 aa).

The next 7 membrane-spanning stretches (helical) occupy residues 31–51 (QLIM…FQLL), 63–83 (LVGY…EAFI), 107–127 (GNLL…SITF), 145–165 (FLGP…ILLI), 191–211 (MFFI…FLLL), 241–261 (ISVI…TILL), and 280–300 (GAFM…SVYF).

The protein belongs to the nematode receptor-like protein srb family.

Its subcellular location is the membrane. This chain is Serpentine receptor class beta-7 (srb-7), found in Caenorhabditis elegans.